The primary structure comprises 412 residues: Yellow-related salivary protein LJM17 (412 aa).

A signal peptide spans 1-18 (MRFFFVFLAIVLFQGIHG). Residue N29 is glycosylated (N-linked (GlcNAc...) asparagine).

Belongs to the major royal jelly protein family. In terms of tissue distribution, salivary gland.

It localises to the secreted. Functionally, probably modulates blood feeding of sand flies on vertebrate species by binding and sequestering different mediators involved in the host response. Binds biogenic amines. Binds serotonin with high affinity. Binds noradrenaline but not adrenaline. Binds dopamine and octopamine. Binds histamine. Inhibits host smooth muscle contraction induced by histamine in bioassay with guinea pig ileum. Immunogenic; elicits antibody production in the host. Functions as a chemoattractant for host neutrophils; likely acts through a G-protein-coupled receptor and effect is dependent on calcium influx. The polypeptide is Yellow-related salivary protein LJM17 (Lutzomyia longipalpis (Sand fly)).